The following is a 127-amino-acid chain: uncharacterized protein (127 aa).

This is an uncharacterized protein from Acidianus two-tailed virus (ATV).